Consider the following 265-residue polypeptide: L-histidine 2-aminobutanoyltransferase (265 aa).

The protein belongs to the methyltransferase superfamily. CntL family.

It carries out the reaction L-histidine + S-adenosyl-L-methionine = (2S)-2-amino-4-{[(1S)-1-carboxy-2-(1H-imidazol-4-yl)ethyl]amino}butanoate + S-methyl-5'-thioadenosine + H(+). Catalyzes the nucleophilic attack of one alpha-aminobutanoate moiety from SAM onto L-histidine to produce the intermediate (2S)-2-amino-4-{[(1S)-1-carboxy-2-(1H-imidazol-4-yl)ethyl]amino}butanoate. Functions in the biosynthesis of the metallophore yersinopine, which is involved in metal acquisition and thus enables bacterial growth inside the host, where metal access is limited. Therefore, this enzyme probably contributes to Yersinia virulence. The polypeptide is L-histidine 2-aminobutanoyltransferase (Yersinia pestis).